Here is a 481-residue protein sequence, read N- to C-terminus: Eukaryotic translation initiation factor 3 subunit L (481 aa).

Residues 1-22 are disordered; it reads MSVDARTAYPGSRPPANMQDES. Positions 262–457 constitute a PCI domain; the sequence is DAIRTFSHIL…DLDYAIEGNL (196 aa).

The protein belongs to the eIF-3 subunit L family. Component of the eukaryotic translation initiation factor 3 (eIF-3) complex.

It localises to the cytoplasm. Its function is as follows. Component of the eukaryotic translation initiation factor 3 (eIF-3) complex, which is involved in protein synthesis of a specialized repertoire of mRNAs and, together with other initiation factors, stimulates binding of mRNA and methionyl-tRNAi to the 40S ribosome. The eIF-3 complex specifically targets and initiates translation of a subset of mRNAs involved in cell proliferation. This chain is Eukaryotic translation initiation factor 3 subunit L, found in Coccidioides immitis (strain RS) (Valley fever fungus).